The chain runs to 773 residues: Lon protease homolog 2, peroxisomal (773 aa).

A Lon N-terminal domain is found at 9 to 198 (LPVIVVDSGV…MCEKWMQMQR (190 aa)). 336-343 (GPPGIGKT) is a binding site for ATP. One can recognise a Lon proteolytic domain in the interval 587–766 (PLPPGVCFGL…EDVIEAMMEK (180 aa)). Catalysis depends on residues Ser672 and Lys715. Residues 771–773 (AKL) carry the Microbody targeting signal motif.

The protein belongs to the peptidase S16 family.

The protein resides in the peroxisome matrix. It catalyses the reaction Hydrolysis of proteins in presence of ATP.. Functionally, ATP-dependent serine protease that mediates the selective degradation of misfolded and unassembled polypeptides in the peroxisomal matrix. Necessary for type 2 peroxisome targeting signal (PTS2)-containing protein processing and facilitates peroxisome matrix protein import. This is Lon protease homolog 2, peroxisomal from Caenorhabditis briggsae.